The following is a 740-amino-acid chain: Protein SMY2 (740 aa).

Phosphoserine occurs at positions 12 and 96. The residue at position 129 (threonine 129) is a Phosphothreonine. Positions 205 to 261 (ESSWRYIDTQGQIHGPFTTQMMSQWYIGGYFASTLQISRLGSTPETLGINDIFITLG) constitute a GYF domain. A Phosphothreonine modification is found at threonine 311. Disordered stretches follow at residues 346 to 510 (ISQT…KEEL), 523 to 548 (PSNQ…SPLK), and 567 to 592 (QSSS…VTSK). Residues 364–439 (EKGKKEKSES…KKSEKTKKDT (76 aa)) are compositionally biased toward basic and acidic residues. Residues 369-440 (EKSESVAKAL…KSEKTKKDTQ (72 aa)) adopt a coiled-coil conformation. Positions 452 to 467 (LPSLNSSSANPAPWAS) are enriched in low complexity. Positions 474–486 (AIETSIKNGVSST) are enriched in polar residues. Basic and acidic residues predominate over residues 500 to 510 (NSKEEKQKEEL). Residues 523 to 536 (PSNQTIDIKSQFQK) show a composition bias toward polar residues. At serine 545 the chain carries Phosphoserine. Serine 602 is modified (phosphoserine).

Belongs to the SMY2/mpd2 family. As to quaternary structure, interacts with EAP1 and MSL5 (via the GYP domain).

The protein localises to the cytoplasm. Suppressor of the MYO2 gene. This Saccharomyces cerevisiae (strain ATCC 204508 / S288c) (Baker's yeast) protein is Protein SMY2 (SMY2).